A 635-amino-acid chain; its full sequence is Threonine--tRNA ligase (635 aa).

Residues 1–58 (MIHVTCNQEAFELPEGASAMDLANKMKQSHCFAGALINDQEKDLSTTLQDGDTVLFLT) enclose the TGS domain. The tract at residues 237–528 (DHRVLGTKLD…LIEHFKGRFP (292 aa)) is catalytic. Cys-328, His-379, and His-505 together coordinate Zn(2+).

This sequence belongs to the class-II aminoacyl-tRNA synthetase family. In terms of assembly, homodimer. Requires Zn(2+) as cofactor.

Its subcellular location is the cytoplasm. The catalysed reaction is tRNA(Thr) + L-threonine + ATP = L-threonyl-tRNA(Thr) + AMP + diphosphate + H(+). Its function is as follows. Catalyzes the attachment of threonine to tRNA(Thr) in a two-step reaction: L-threonine is first activated by ATP to form Thr-AMP and then transferred to the acceptor end of tRNA(Thr). Also edits incorrectly charged L-seryl-tRNA(Thr). The sequence is that of Threonine--tRNA ligase from Chlamydia trachomatis serovar A (strain ATCC VR-571B / DSM 19440 / HAR-13).